The following is a 525-amino-acid chain: Arabinose import ATP-binding protein AraG 2 (525 aa).

The disordered stretch occupies residues 1–25; the sequence is MTDTTIRARGAQAAGSPAGAGPLDA. A compositionally biased stretch (low complexity) spans 7 to 25; that stretch reads RARGAQAAGSPAGAGPLDA. ABC transporter domains lie at 35 to 270 and 281 to 524; these read LELD…MVGR and REPG…LALP. ATP is bound at residue 67–74; sequence GENGAGKS.

It belongs to the ABC transporter superfamily. Arabinose importer (TC 3.A.1.2.2) family. As to quaternary structure, the complex is composed of two ATP-binding proteins (AraG), two transmembrane proteins (AraH) and a solute-binding protein (AraF).

Its subcellular location is the cell inner membrane. It catalyses the reaction L-arabinose(out) + ATP + H2O = L-arabinose(in) + ADP + phosphate + H(+). In terms of biological role, part of the ABC transporter complex AraFGH involved in arabinose import. Responsible for energy coupling to the transport system. This is Arabinose import ATP-binding protein AraG 2 from Burkholderia thailandensis (strain ATCC 700388 / DSM 13276 / CCUG 48851 / CIP 106301 / E264).